We begin with the raw amino-acid sequence, 542 residues long: Adenine deaminase (542 aa).

It belongs to the metallo-dependent hydrolases superfamily. Adenine deaminase family. It depends on Mn(2+) as a cofactor.

It catalyses the reaction adenine + H2O + H(+) = hypoxanthine + NH4(+). This chain is Adenine deaminase, found in Methanosphaera stadtmanae (strain ATCC 43021 / DSM 3091 / JCM 11832 / MCB-3).